Reading from the N-terminus, the 557-residue chain is Potassium-transporting ATPase potassium-binding subunit (557 aa).

A run of 10 helical transmembrane segments spans residues 6 to 26, 59 to 79, 127 to 147, 172 to 192, 247 to 267, 278 to 298, 363 to 383, 410 to 430, 475 to 495, and 520 to 540; these read IQLLIFLFALLIFSPLFGLGL, ALSLLVFNFFGFLLLFLILFF, AGLTTQNFLSATTGLCVLLAL, LYVLLPLSFIFALFLVGFGVV, ISNFLQMFSILILPGACVFLY, WAIFSVMFTILCVGILIVWTF, IVFGGVGAGMYGMILFVLLTV, ILGILLPSTIILLFTAISVSV, VMIAIAMILGRFGVILPVLVI, and FYILLLSVIIIVGALTFFPVL.

This sequence belongs to the KdpA family. In terms of assembly, the system is composed of three essential subunits: KdpA, KdpB and KdpC.

It localises to the cell inner membrane. Functionally, part of the high-affinity ATP-driven potassium transport (or Kdp) system, which catalyzes the hydrolysis of ATP coupled with the electrogenic transport of potassium into the cytoplasm. This subunit binds the periplasmic potassium ions and delivers the ions to the membrane domain of KdpB through an intramembrane tunnel. In Leptospira interrogans serogroup Icterohaemorrhagiae serovar Lai (strain 56601), this protein is Potassium-transporting ATPase potassium-binding subunit.